A 196-amino-acid chain; its full sequence is Cell division protein SepF (196 aa).

The interval valine 15–lysine 80 is disordered. Over residues proline 57–lysine 72 the composition is skewed to low complexity.

The protein belongs to the SepF family. In terms of assembly, homodimer. Interacts with FtsZ.

It localises to the cytoplasm. Its function is as follows. Cell division protein that is part of the divisome complex and is recruited early to the Z-ring. Probably stimulates Z-ring formation, perhaps through the cross-linking of FtsZ protofilaments. Its function overlaps with FtsA. The protein is Cell division protein SepF of Lactococcus lactis subsp. cremoris (strain MG1363).